We begin with the raw amino-acid sequence, 376 residues long: Fructose-1,6-bisphosphate aldolase/phosphatase (376 aa).

Catalysis depends on Asp-11, which acts as the Proton acceptor; for FBP phosphatase activity. Residues Asp-11, His-18, Asp-49, and Asp-50 each coordinate Mg(2+). Beta-D-fructose 1,6-bisphosphate is bound at residue His-18. A dihydroxyacetone phosphate-binding site is contributed by His-18. Position 87 (Tyr-87) interacts with beta-D-fructose 1,6-bisphosphate. Gln-91 serves as a coordination point for Mg(2+). Residue 100–101 (GN) participates in beta-D-fructose 1,6-bisphosphate binding. Asp-128 serves as a coordination point for Mg(2+). Position 129 (Lys-129) interacts with beta-D-fructose 1,6-bisphosphate. Lys-129 contributes to the dihydroxyacetone phosphate binding site. Tyr-224 (proton donor/acceptor; for FBP aldolase activity) is an active-site residue. Mg(2+) contacts are provided by Lys-227, Asp-228, and Asp-229. Lys-227 acts as the Schiff-base intermediate with DHAP; for FBP aldolase activity in catalysis. Residues 237-238 (QK), Arg-261, and Tyr-342 contribute to the beta-D-fructose 1,6-bisphosphate site. Position 261 (Arg-261) interacts with dihydroxyacetone phosphate. The interval 357–376 (MVPLKDSGPAGTGRAYEDPD) is disordered.

This sequence belongs to the FBP aldolase/phosphatase family. As to quaternary structure, homooctamer; dimer of tetramers. The cofactor is Mg(2+).

The catalysed reaction is beta-D-fructose 1,6-bisphosphate + H2O = beta-D-fructose 6-phosphate + phosphate. It carries out the reaction beta-D-fructose 1,6-bisphosphate = D-glyceraldehyde 3-phosphate + dihydroxyacetone phosphate. It participates in carbohydrate biosynthesis; gluconeogenesis. In terms of biological role, catalyzes two subsequent steps in gluconeogenesis: the aldol condensation of dihydroxyacetone phosphate (DHAP) and glyceraldehyde-3-phosphate (GA3P) to fructose-1,6-bisphosphate (FBP), and the dephosphorylation of FBP to fructose-6-phosphate (F6P). In Cenarchaeum symbiosum (strain A), this protein is Fructose-1,6-bisphosphate aldolase/phosphatase.